The chain runs to 152 residues: Lipoprotein signal peptidase (152 aa).

3 helical membrane-spanning segments follow: residues 5–25 (LFVLSLILLVALDQLSKFWIV), 61–81 (WFFVVITVLVIGYAIYYLATH), and 84–104 (LNIWKQLALLLIISGGIGNFI). Catalysis depends on residues Asp114 and Asp130. Residues 125-145 (IFNVADSYLTVGVILLVICLW) form a helical membrane-spanning segment.

The protein belongs to the peptidase A8 family.

It is found in the cell membrane. It catalyses the reaction Release of signal peptides from bacterial membrane prolipoproteins. Hydrolyzes -Xaa-Yaa-Zaa-|-(S,diacylglyceryl)Cys-, in which Xaa is hydrophobic (preferably Leu), and Yaa (Ala or Ser) and Zaa (Gly or Ala) have small, neutral side chains.. The protein operates within protein modification; lipoprotein biosynthesis (signal peptide cleavage). In terms of biological role, this protein specifically catalyzes the removal of signal peptides from prolipoproteins. In Streptococcus pyogenes serotype M2 (strain MGAS10270), this protein is Lipoprotein signal peptidase.